The chain runs to 315 residues: Ribosomal protein L11 methyltransferase (315 aa).

S-adenosyl-L-methionine-binding residues include T163, G184, D206, and N248.

The protein belongs to the methyltransferase superfamily. PrmA family.

It is found in the cytoplasm. It carries out the reaction L-lysyl-[protein] + 3 S-adenosyl-L-methionine = N(6),N(6),N(6)-trimethyl-L-lysyl-[protein] + 3 S-adenosyl-L-homocysteine + 3 H(+). Functionally, methylates ribosomal protein L11. In Lacticaseibacillus paracasei (strain ATCC 334 / BCRC 17002 / CCUG 31169 / CIP 107868 / KCTC 3260 / NRRL B-441) (Lactobacillus paracasei), this protein is Ribosomal protein L11 methyltransferase.